The chain runs to 259 residues: Dickkopf-related protein 2 (259 aa).

The signal sequence occupies residues 1–33 (MAALMRVKDSSRCLLLLAAVLMVESSQLGSSRA). A disordered region spans residues 42–70 (LGGETPAQSANRSAGMNQGLAFGGSKKGK). The segment covering 47–57 (PAQSANRSAGM) has biased composition (polar residues). The N-linked (GlcNAc...) asparagine glycan is linked to asparagine 52. Residues 78–127 (CSSDKECEVGRYCHSPHQGSSACMLCRRKKKRCHRDGMCCPGTRCNNGIC) are DKK-type Cys-1. Cystine bridges form between cysteine 183–cysteine 195, cysteine 189–cysteine 204, cysteine 194–cysteine 231, cysteine 214–cysteine 239, and cysteine 233–cysteine 256. A DKK-type Cys-2 region spans residues 183–256 (CLRSSDCIDG…YSSKARLHVC (74 aa)).

Belongs to the dickkopf family. As to quaternary structure, interacts with LRP5 and LRP6. Post-translationally, may be proteolytically processed by a furin-like protease.

It is found in the secreted. Its function is as follows. Antagonizes canonical Wnt signaling by inhibiting LRP5/6 interaction with Wnt and by forming a ternary complex with the transmembrane protein KREMEN that promotes internalization of LRP5/6. DKKs play an important role in vertebrate development, where they locally inhibit Wnt regulated processes such as antero-posterior axial patterning, limb development, somitogenesis and eye formation. In the adult, Dkks are implicated in bone formation and bone disease, cancer and Alzheimer disease. This Mus musculus (Mouse) protein is Dickkopf-related protein 2.